Reading from the N-terminus, the 117-residue chain is Peptidyl-tRNA hydrolase (117 aa).

This sequence belongs to the PTH2 family.

It localises to the cytoplasm. The catalysed reaction is an N-acyl-L-alpha-aminoacyl-tRNA + H2O = an N-acyl-L-amino acid + a tRNA + H(+). In terms of biological role, the natural substrate for this enzyme may be peptidyl-tRNAs which drop off the ribosome during protein synthesis. The protein is Peptidyl-tRNA hydrolase of Thermoplasma volcanium (strain ATCC 51530 / DSM 4299 / JCM 9571 / NBRC 15438 / GSS1).